Consider the following 140-residue polypeptide: Transmembrane protein 107 (140 aa).

2 helical membrane passes run 7–27 and 53–73; these read LVPS…TIFW and LIIA…GFLS. Asn-79 is a glycosylation site (N-linked (GlcNAc...) asparagine). 2 helical membrane passes run 84–104 and 113–133; these read LLSV…LFEG and IMSF…IAVF.

The protein localises to the membrane. Its function is as follows. May play a role in cilia formation and embryonic patterning. The chain is Transmembrane protein 107 (tmem107) from Xenopus laevis (African clawed frog).